The primary structure comprises 279 residues: uncharacterized protein (279 aa).

Positions 1-21 (MKIIRTLFLLLIAVYGSSVVA) are cleaved as a signal peptide.

The protein to E.coli YfcO.

This is an uncharacterized protein from Salmonella typhimurium (strain LT2 / SGSC1412 / ATCC 700720).